A 430-amino-acid polypeptide reads, in one-letter code: Probable sugar isomerase R00627 (430 aa).

Residues H257, D289, and D291 each coordinate Mn(2+).

This sequence belongs to the rhamnose isomerase family. Mn(2+) is required as a cofactor.

The chain is Probable sugar isomerase R00627 from Rhizobium meliloti (strain 1021) (Ensifer meliloti).